We begin with the raw amino-acid sequence, 315 residues long: DNA-directed RNA polymerase subunit alpha (315 aa).

The alpha N-terminal domain (alpha-NTD) stretch occupies residues 1–228; it reads MIEIEKPKVD…EHLNLFIDLT (228 aa). An alpha C-terminal domain (alpha-CTD) region spans residues 245–315; it reads KEKVLEMTIE…LGLGLKPSEE (71 aa).

Belongs to the RNA polymerase alpha chain family. Homodimer. The RNAP catalytic core consists of 2 alpha, 1 beta, 1 beta' and 1 omega subunit. When a sigma factor is associated with the core the holoenzyme is formed, which can initiate transcription.

It catalyses the reaction RNA(n) + a ribonucleoside 5'-triphosphate = RNA(n+1) + diphosphate. Its function is as follows. DNA-dependent RNA polymerase catalyzes the transcription of DNA into RNA using the four ribonucleoside triphosphates as substrates. The polypeptide is DNA-directed RNA polymerase subunit alpha (Clostridioides difficile (strain 630) (Peptoclostridium difficile)).